The following is an 85-amino-acid chain: Beta-toxin BmKAS (85 aa).

A signal peptide spans 1 to 19; it reads MKTVIFLIVSSLLLIGVKT. Residues 20-82 form the LCN-type CS-alpha/beta domain; that stretch reads DNGYLLDKYT…LWNYNTNKCN (63 aa). 4 disulfide bridges follow: C31–C81, C35–C56, C42–C63, and C46–C65.

Expressed by the venom gland.

The protein resides in the secreted. Beta toxins bind voltage-independently at site-4 of sodium channels (Nav) and shift the voltage of activation toward more negative potentials thereby affecting sodium channel activation and promoting spontaneous and repetitive firing. It binds to distinct receptor sites of mammal and insect voltage-gated sodium channels. It displays antinociceptive effect in rat models, which is due to its specific modulation of sodium channels of sensory neurons. It also significantly stimulates the binding of [3H]-ryanodine to ryanodine receptors on the sarcoplasmic reticulum of the skeletal muscle through an indirect mechanism. And it promotes noradrenaline release from the rat hippocampus slice. This Olivierus martensii (Manchurian scorpion) protein is Beta-toxin BmKAS.